The sequence spans 276 residues: Phosphonates import ATP-binding protein PhnC (276 aa).

Residues Ile5–Leu253 form the ABC transporter domain. Gly37–Ser44 contributes to the ATP binding site.

This sequence belongs to the ABC transporter superfamily. Phosphonates importer (TC 3.A.1.9.1) family. The complex is composed of two ATP-binding proteins (PhnC), two transmembrane proteins (PhnE) and a solute-binding protein (PhnD).

It localises to the cell inner membrane. It catalyses the reaction phosphonate(out) + ATP + H2O = phosphonate(in) + ADP + phosphate + H(+). In terms of biological role, part of the ABC transporter complex PhnCDE involved in phosphonates import. Responsible for energy coupling to the transport system. The protein is Phosphonates import ATP-binding protein PhnC of Stutzerimonas stutzeri (Pseudomonas stutzeri).